We begin with the raw amino-acid sequence, 87 residues long: Lipid-anchored plasma membrane protein uvi15 (87 aa).

Positions 1-64 (MSAQQFYGDK…MYVQQPQASD (64 aa)) are disordered. The segment covering 18 to 41 (QQAYGGPNYYPPQQNYPQQGYAPP) has biased composition (low complexity).

Belongs to the CYSTM1 family. Post-translationally, palmitoylated.

Its subcellular location is the cell membrane. The protein resides in the cell tip. Functionally, required for the maintenance of viability of cells in stationary phase and in starvation conditions. In Schizosaccharomyces pombe (strain 972 / ATCC 24843) (Fission yeast), this protein is Lipid-anchored plasma membrane protein uvi15 (uvi15).